We begin with the raw amino-acid sequence, 298 residues long: Formamidopyrimidine-DNA glycosylase (298 aa).

Pro2 (schiff-base intermediate with DNA) is an active-site residue. The active-site Proton donor is the Glu3. The active-site Proton donor; for beta-elimination activity is Lys58. 3 residues coordinate DNA: His106, Arg128, and Lys171. The segment at 262–298 (SVYDQEGQPCRTPGCGGTVERVVQAGRSTFYCAACQK) adopts an FPG-type zinc-finger fold. Arg288 functions as the Proton donor; for delta-elimination activity in the catalytic mechanism.

This sequence belongs to the FPG family. Monomer. Requires Zn(2+) as cofactor.

The enzyme catalyses Hydrolysis of DNA containing ring-opened 7-methylguanine residues, releasing 2,6-diamino-4-hydroxy-5-(N-methyl)formamidopyrimidine.. It carries out the reaction 2'-deoxyribonucleotide-(2'-deoxyribose 5'-phosphate)-2'-deoxyribonucleotide-DNA = a 3'-end 2'-deoxyribonucleotide-(2,3-dehydro-2,3-deoxyribose 5'-phosphate)-DNA + a 5'-end 5'-phospho-2'-deoxyribonucleoside-DNA + H(+). Functionally, involved in base excision repair of DNA damaged by oxidation or by mutagenic agents. Acts as a DNA glycosylase that recognizes and removes damaged bases. Has a preference for oxidized purines, such as 7,8-dihydro-8-oxoguanine (8-oxoG). Has AP (apurinic/apyrimidinic) lyase activity and introduces nicks in the DNA strand. Cleaves the DNA backbone by beta-delta elimination to generate a single-strand break at the site of the removed base with both 3'- and 5'-phosphates. In Agrobacterium fabrum (strain C58 / ATCC 33970) (Agrobacterium tumefaciens (strain C58)), this protein is Formamidopyrimidine-DNA glycosylase (mutM).